A 226-amino-acid polypeptide reads, in one-letter code: Endonuclease V (226 aa).

Mg(2+)-binding residues include D43 and D111.

The protein belongs to the endonuclease V family. It depends on Mg(2+) as a cofactor.

It is found in the cytoplasm. The enzyme catalyses Endonucleolytic cleavage at apurinic or apyrimidinic sites to products with a 5'-phosphate.. In terms of biological role, DNA repair enzyme involved in the repair of deaminated bases. Selectively cleaves double-stranded DNA at the second phosphodiester bond 3' to a deoxyinosine leaving behind the intact lesion on the nicked DNA. This chain is Endonuclease V, found in Nocardia farcinica (strain IFM 10152).